We begin with the raw amino-acid sequence, 390 residues long: Putative transposase YncI (390 aa).

This sequence belongs to the transposase 11 family.

This chain is Putative transposase YncI (yncI), found in Escherichia coli O157:H7.